A 579-amino-acid chain; its full sequence is Isocitrate dehydrogenase kinase/phosphatase (579 aa).

Residues 324-330 and Lys-345 each bind ATP; that span reads ADGTPGM. Asp-380 is an active-site residue.

It belongs to the AceK family.

It is found in the cytoplasm. It catalyses the reaction L-seryl-[isocitrate dehydrogenase] + ATP = O-phospho-L-seryl-[isocitrate dehydrogenase] + ADP + H(+). Bifunctional enzyme which can phosphorylate or dephosphorylate isocitrate dehydrogenase (IDH) on a specific serine residue. This is a regulatory mechanism which enables bacteria to bypass the Krebs cycle via the glyoxylate shunt in response to the source of carbon. When bacteria are grown on glucose, IDH is fully active and unphosphorylated, but when grown on acetate or ethanol, the activity of IDH declines drastically concomitant with its phosphorylation. This is Isocitrate dehydrogenase kinase/phosphatase from Xanthomonas axonopodis pv. citri (strain 306).